A 1604-amino-acid chain; its full sequence is Collagen alpha-1(XVI) chain (1604 aa).

The signal sequence occupies residues 1–21 (MWVSWAPGLWLLGLWATFGHG). N-linked (GlcNAc...) asparagine glycosylation occurs at Asn47. The region spanning 50–231 (GFNLIHRLSL…LQQVHIYCDP (182 aa)) is the Laminin G-like domain. A nonhelical region 10 (NC10) region spans residues 232-374 (ELVLEEGCCE…SPDAPLQCAE (143 aa)). Residues 301-311 (AERGAKVHQET) show a composition bias toward basic and acidic residues. The tract at residues 301-509 (AERGAKVHQE…KGEKGDPCEV (209 aa)) is disordered. Asn327 is a glycosylation site (N-linked (GlcNAc...) asparagine). Positions 375–423 (GPKGEKGESGALGPSGLPGSTGEKGQKGEKGDGGIKGVPGKPGRDGRPG) constitute a Collagen-like 1 domain. The tract at residues 375-506 (GPKGEKGESG…PGVKGEKGDP (132 aa)) is triple-helical region 9 (COL9) with 3 imperfections. Residues 383–397 (SGALGPSGLPGSTGE) show a composition bias toward low complexity. A compositionally biased stretch (basic and acidic residues) spans 398 to 407 (KGQKGEKGDG). Positions 449 to 460 (PGPPGLPGPPGI) are enriched in pro residues. A compositionally biased stretch (gly residues) spans 486–495 (GKEGPGGKPG). Residues 507–521 (CEVCPTLPEGFQNFV) form a nonhelical region 9 (NC9) region. The tract at residues 522-555 (GLPGKPGPKGEPGDPVPARGDPGIQGIKGEKGEP) is triple-helical region 8 (COL8) with 1 imperfection. A Cell attachment site motif is present at residues 540–542 (RGD). The segment at 556 to 572 (CLSCSSVVGAQHLVSST) is nonhelical region 8 (NC8). A triple-helical region 7 (COL7) with 1 imperfection region spans residues 573-631 (GASGDVGSPGFGLPGLPGRAGVPGLKGEKGNFGEAGPAGSPGPPGPVGPAGIKGAKGEP). Collagen-like domains lie at 573–633 (GASG…EPCE) and 667–721 (GLPG…GEKG). The disordered stretch occupies residues 604–917 (FGEAGPAGSP…PPGIPGPPGP (314 aa)). The interval 632–652 (CEPCPALSNLQDGDVRVVALP) is nonhelical region 7 (NC7). The tract at residues 653-723 (GPSGEKGEPG…AGPKGEKGDG (71 aa)) is triple-helical region 6 (COL6) with 1 imperfection. The span at 674 to 684 (KAGERGLKGQK) shows a compositional bias: basic and acidic residues. Residues 686-702 (DAGNPGDPGTPGTTGRP) are compositionally biased toward low complexity. The nonhelical region 6 (NC6) stretch occupies residues 724–738 (CTACPSLQGTVTDMA). The segment at 739–876 (GRPGQPGPKG…RGEKGEPGEC (138 aa)) is triple-helical region 5 (COL5) with 3 imperfections. 3 stretches are compositionally biased toward low complexity: residues 766 to 781 (LPGV…VQGE), 792 to 808 (PQGE…QGLP), and 826 to 846 (PGVK…SGPP). One can recognise a Collagen-like 4 domain in the interval 788–840 (GVQGPQGEPGAPGLPGIQGLPGPRGPPGPTGEKGAQGSPGVKGATGPVGPPGA). A compositionally biased stretch (basic and acidic residues) spans 864 to 873 (KGPRGEKGEP). Residues 877–887 (SCPSQGDLIFS) form a nonhelical region 5 (NC5) region. The Collagen-like 5 domain occupies 888 to 938 (GMPGAPGLWMGSSWQPGPQGPPGIPGPPGPPGVPGLQGVPGNNGLPGQPGL). The interval 888-939 (GMPGAPGLWMGSSWQPGPQGPPGIPGPPGPPGVPGLQGVPGNNGLPGQPGLT) is triple-helical region 4 (COL4) with 2 imperfections. Over residues 905–917 (PQGPPGIPGPPGP) the composition is skewed to pro residues. A nonhelical region 4 (NC4) region spans residues 940-973 (AELGSLPIEQHLLKSICGDCVQGQRAHPGYLVEK). Positions 974 to 988 (GEKGDQGIPGVPGLD) are triple-helical region 3 (COL3). A nonhelical region 3 (NC3) region spans residues 989-1011 (NCAQCFLSLERPRAEEARGDNSE). 2 disordered regions span residues 1001–1429 (RAEE…VPGS) and 1468–1517 (MAAA…PGTK). Residues 1006–1008 (RGD) carry the Cell attachment site motif. The interval 1012-1433 (GDPGCVGSPG…PGVPGSMGDM (422 aa)) is triple-helical region 2 (COL2) with 2 imperfections. One can recognise a Collagen-like 6 domain in the interval 1018–1075 (GSPGLPGPPGLPGQRGEEGPPGMRGSPGPPGPIGPPGFPGAVGSPGLPGLQGERGLTG). Composition is skewed to pro residues over residues 1044-1055 (PGPPGPIGPPGF), 1160-1169 (FPGPPGPPGF), and 1199-1208 (SPGPPGPPGI). Positions 1217-1226 (LDGKDGKPGL) are enriched in basic and acidic residues. A Cell attachment site motif is present at residues 1227-1229 (RGD). The span at 1271 to 1284 (RPGAEGEPGAMGPQ) shows a compositional bias: low complexity. 2 stretches are compositionally biased toward pro residues: residues 1286–1302 (RPGP…PGQP) and 1330–1342 (QPGP…PPGE). Positions 1369-1378 (DPGAAGQKGQ) are enriched in low complexity. Over residues 1386–1395 (GMPGGPGKSG) the composition is skewed to gly residues. A compositionally biased stretch (low complexity) spans 1420 to 1429 (SPGLPGVPGS). The segment at 1434–1472 (VNYDEIKRFIRQEIIKMFDERMAYYTSRMQFPMEMAAAP) is nonhelical region 2 (NC2). Collagen-like domains are found at residues 1472-1524 (PGRP…GDIG) and 1528-1576 (AGEN…GKAG). Residues 1473 to 1578 (GRPGPPGKDG…MGQPGKAGHC (106 aa)) are triple-helical region 1 (COL1) with 2 imperfections. The tract at residues 1579–1604 (NPSDCFGAMPMEQQYPPMKTMKGPFG) is nonhelical region 1 (NC1).

The protein belongs to the fibril-associated collagens with interrupted helices (FACIT) family. In terms of assembly, homotrimer. Interacts with FBN1, fibronectin and integrins ITGA1/ITGB1 and ITGA2/ITGB1. Integrin ITGA1/ITGB1 binds to a unique site within COL16A1 located close to its C-terminal end between collagenous domains COL1-COL3. In terms of processing, prolines at the third position of the tripeptide repeating unit (G-X-Y) are hydroxylated in some or all of the chains. Post-translationally, glycosylated. In terms of tissue distribution, in papillary dermis, is a component of specialized fibrillin-1-containing microfibrils, whereas in territorial cartilage matrix, it is localized to a discrete population of thin, weakly banded collagen fibrils in association with other collagens (at protein level). In the placenta, where it is found in the amnion, a membranous tissue lining the amniotic cavity. Within the amnion, it is found in an acellular, relatively dense layer of a complex network of reticular fibers. Also located to a fibroblast layer beneath this dense layer. Exists in tissues in association with other types of collagen.

It localises to the secreted. It is found in the extracellular space. Its subcellular location is the extracellular matrix. Its function is as follows. Involved in mediating cell attachment and inducing integrin-mediated cellular reactions, such as cell spreading and alterations in cell morphology. The protein is Collagen alpha-1(XVI) chain (COL16A1) of Homo sapiens (Human).